A 206-amino-acid polypeptide reads, in one-letter code: dITP/XTP pyrophosphatase (206 aa).

7–12 provides a ligand contact to substrate; the sequence is SCHGYK. Catalysis depends on D70, which acts as the Proton acceptor. D70 contributes to the Mg(2+) binding site. Substrate is bound by residues T71, 154 to 157, K177, and 182 to 183; these read FGYD and HR.

It belongs to the HAM1 NTPase family. In terms of assembly, homodimer. It depends on Mg(2+) as a cofactor.

The catalysed reaction is XTP + H2O = XMP + diphosphate + H(+). It carries out the reaction dITP + H2O = dIMP + diphosphate + H(+). The enzyme catalyses ITP + H2O = IMP + diphosphate + H(+). Its function is as follows. Pyrophosphatase that catalyzes the hydrolysis of nucleoside triphosphates to their monophosphate derivatives, with a high preference for the non-canonical purine nucleotides XTP (xanthosine triphosphate), dITP (deoxyinosine triphosphate) and ITP. Seems to function as a house-cleaning enzyme that removes non-canonical purine nucleotides from the nucleotide pool, thus preventing their incorporation into DNA/RNA and avoiding chromosomal lesions. This chain is dITP/XTP pyrophosphatase, found in Chlamydia caviae (strain ATCC VR-813 / DSM 19441 / 03DC25 / GPIC) (Chlamydophila caviae).